Here is a 591-residue protein sequence, read N- to C-terminus: Aspartate--tRNA(Asp/Asn) ligase (591 aa).

An L-aspartate-binding site is contributed by E175. The tract at residues Q199–K202 is aspartate. L-aspartate is bound by residues R221 and H450. R221–E223 is a binding site for ATP. E484 contributes to the ATP binding site. L-aspartate is bound at residue R491. G536–R539 contacts ATP.

It belongs to the class-II aminoacyl-tRNA synthetase family. Type 1 subfamily. As to quaternary structure, homodimer.

It localises to the cytoplasm. It carries out the reaction tRNA(Asx) + L-aspartate + ATP = L-aspartyl-tRNA(Asx) + AMP + diphosphate. Functionally, aspartyl-tRNA synthetase with relaxed tRNA specificity since it is able to aspartylate not only its cognate tRNA(Asp) but also tRNA(Asn). Reaction proceeds in two steps: L-aspartate is first activated by ATP to form Asp-AMP and then transferred to the acceptor end of tRNA(Asp/Asn). This chain is Aspartate--tRNA(Asp/Asn) ligase, found in Rhodopseudomonas palustris (strain ATCC BAA-98 / CGA009).